The following is a 249-amino-acid chain: 3-deoxy-D-manno-octulosonic acid kinase (249 aa).

The active site involves aspartate 175.

The protein belongs to the protein kinase superfamily. KdkA/RfaP family.

The protein resides in the cell inner membrane. The catalysed reaction is an alpha-Kdo-(2-&gt;6)-lipid IVA + ATP = a 4-O-phospho-alpha-Kdo-(2-&gt;6)-lipid IVA + ADP + H(+). It participates in bacterial outer membrane biogenesis; LPS core biosynthesis. Its function is as follows. Catalyzes the ATP-dependent phosphorylation of the 3-deoxy-D-manno-octulosonic acid (Kdo) residue in Kdo-lipid IV(A) at the 4-OH position. The sequence is that of 3-deoxy-D-manno-octulosonic acid kinase from Xylella fastidiosa (strain M12).